The following is a 206-amino-acid chain: 3-demethoxyubiquinol 3-hydroxylase (206 aa).

6 residues coordinate Fe cation: E55, E85, H88, E137, E169, and H172.

This sequence belongs to the COQ7 family. The cofactor is Fe cation.

The protein localises to the cell membrane. The catalysed reaction is a 5-methoxy-2-methyl-3-(all-trans-polyprenyl)benzene-1,4-diol + AH2 + O2 = a 3-demethylubiquinol + A + H2O. Its pathway is cofactor biosynthesis; ubiquinone biosynthesis. Functionally, catalyzes the hydroxylation of 2-nonaprenyl-3-methyl-6-methoxy-1,4-benzoquinol during ubiquinone biosynthesis. In Azoarcus sp. (strain BH72), this protein is 3-demethoxyubiquinol 3-hydroxylase.